The primary structure comprises 258 residues: Spindlin-2B (258 aa).

Residues 1-23 (MKTPNAQEAEGQQTRAAAGRATG) are compositionally biased toward low complexity. Residues 1-49 (MKTPNAQEAEGQQTRAAAGRATGSANMTKKKVSQKKQRGRPSSQPRRNI) are disordered. Over residues 28-39 (TKKKVSQKKQRG) the composition is skewed to basic residues. 3 tudor-like domain regions span residues 50-99 (VGCR…LELH), 129-178 (IGKA…YQLL), and 210-255 (IGKH…YDLV). 2 histone H3K4me3 and H3R8me2a binding regions span residues E138 and 246–248 (DFH).

The protein belongs to the SPIN/STSY family. Interacts with C11orf84/SPINDOC. As to expression, detected in all the examined tissues with highest expression in liver, followed by heart, stomach, kidney, skeletal muscle, placenta, and pancreas.

The protein resides in the nucleus. Its function is as follows. Involved in the regulation of cell cycle progression, this activity is related to the inhibition of apoptosis following the removal of essential growth factors. Exhibits H3K4me3-binding activity. This Homo sapiens (Human) protein is Spindlin-2B (SPIN2B).